A 215-amino-acid chain; its full sequence is Probable phosphoglycerate mutase GpmB (215 aa).

Residues 8-15, 21-22, Arg-58, 82-85, 104-105, and 151-152 contribute to the substrate site; these read RHGETQWN, QG, ELDM, RR, and GI. His-9 acts as the Tele-phosphohistidine intermediate in catalysis. The active-site Proton donor/acceptor is the Glu-82.

The protein belongs to the phosphoglycerate mutase family. GpmB subfamily.

The catalysed reaction is (2R)-2-phosphoglycerate = (2R)-3-phosphoglycerate. It functions in the pathway carbohydrate degradation; glycolysis; pyruvate from D-glyceraldehyde 3-phosphate: step 3/5. The polypeptide is Probable phosphoglycerate mutase GpmB (Enterobacter sp. (strain 638)).